A 408-amino-acid polypeptide reads, in one-letter code: tRNA pseudouridine synthase D (408 aa).

Residue Asp76 is the Nucleophile of the active site. The TRUD domain maps to 149-362; sequence GFINYYDSQR…NSFERKVRIL (214 aa).

This sequence belongs to the pseudouridine synthase TruD family.

It catalyses the reaction uridine(13) in tRNA = pseudouridine(13) in tRNA. Responsible for synthesis of pseudouridine from uracil-13 in transfer RNAs. The sequence is that of tRNA pseudouridine synthase D from Leptospira interrogans serogroup Icterohaemorrhagiae serovar Lai (strain 56601).